Here is a 493-residue protein sequence, read N- to C-terminus: Cytochrome c-552 (493 aa).

A signal peptide spans 1–25; sequence MEKKLKSWQGWLLFCGAMAVVFVLG. Histidine 116 provides a ligand contact to heme c. Heme-binding residues include cysteine 144, cysteine 147, and lysine 148. Heme c contacts are provided by cysteine 182, cysteine 185, histidine 186, cysteine 224, cysteine 227, and histidine 228. Ca(2+) contacts are provided by glutamate 230, tyrosine 231, lysine 276, and glutamine 278. Substrate is bound at residue tyrosine 231. Residue histidine 279 participates in substrate binding. Heme c contacts are provided by histidine 290, cysteine 297, cysteine 300, histidine 301, histidine 315, cysteine 328, cysteine 331, histidine 332, and histidine 407.

The protein belongs to the cytochrome c-552 family. It depends on Ca(2+) as a cofactor. Requires heme c as cofactor.

It is found in the periplasm. It catalyses the reaction 6 Fe(III)-[cytochrome c] + NH4(+) + 2 H2O = 6 Fe(II)-[cytochrome c] + nitrite + 8 H(+). It functions in the pathway nitrogen metabolism; nitrate reduction (assimilation). Catalyzes the reduction of nitrite to ammonia, consuming six electrons in the process. This is Cytochrome c-552 from Bacteroides fragilis (strain ATCC 25285 / DSM 2151 / CCUG 4856 / JCM 11019 / LMG 10263 / NCTC 9343 / Onslow / VPI 2553 / EN-2).